We begin with the raw amino-acid sequence, 369 residues long: Caffeine synthase 1 (369 aa).

Residue tyrosine 24 coordinates S-adenosyl-L-homocysteine. Threonine 31 is a binding site for caffeine. Positions 66, 71, 103, 104, 138, and 139 each coordinate S-adenosyl-L-homocysteine. Positions 156, 159, and 160 each coordinate caffeine. Asparagine 177 is a Mg(2+) binding site. Caffeine is bound at residue arginine 225. Mg(2+) is bound by residues aspartate 263, phenylalanine 265, and asparagine 266. Phenylalanine 321 serves as a coordination point for caffeine.

This sequence belongs to the methyltransferase superfamily. Type-7 methyltransferase family. It depends on Mg(2+) as a cofactor.

The enzyme catalyses theobromine + S-adenosyl-L-methionine = caffeine + S-adenosyl-L-homocysteine + H(+). It carries out the reaction 7-methylxanthine + S-adenosyl-L-methionine = theobromine + S-adenosyl-L-homocysteine + H(+). Its pathway is alkaloid biosynthesis. Its function is as follows. Involved in the biosynthesis of caffeine. Catalyzes the conversion of 7-methylxanthine (7mX) to theobromine and of theobromine to caffeine. The polypeptide is Caffeine synthase 1 (Camellia crassicolumna (Evergreen tea)).